Reading from the N-terminus, the 127-residue chain is uncharacterized protein (127 aa).

Positions 71–126 (FYLREYRRIRRRIKELKNRAKYISKGEIAYNPKIMKEVEALKEKLSEIEKKIEELK) form a coiled coil.

This is an uncharacterized protein from Aquifex aeolicus (strain VF5).